The primary structure comprises 617 residues: Dihydroxy-acid dehydratase (617 aa).

Asp-81 provides a ligand contact to Mg(2+). Position 122 (Cys-122) interacts with [2Fe-2S] cluster. Residues Asp-123 and Lys-124 each coordinate Mg(2+). An N6-carboxylysine modification is found at Lys-124. Residue Cys-195 participates in [2Fe-2S] cluster binding. Mg(2+) is bound at residue Glu-491. The active-site Proton acceptor is Ser-517.

It belongs to the IlvD/Edd family. As to quaternary structure, homodimer. [2Fe-2S] cluster serves as cofactor. Mg(2+) is required as a cofactor.

The enzyme catalyses (2R)-2,3-dihydroxy-3-methylbutanoate = 3-methyl-2-oxobutanoate + H2O. The catalysed reaction is (2R,3R)-2,3-dihydroxy-3-methylpentanoate = (S)-3-methyl-2-oxopentanoate + H2O. It participates in amino-acid biosynthesis; L-isoleucine biosynthesis; L-isoleucine from 2-oxobutanoate: step 3/4. The protein operates within amino-acid biosynthesis; L-valine biosynthesis; L-valine from pyruvate: step 3/4. In terms of biological role, functions in the biosynthesis of branched-chain amino acids. Catalyzes the dehydration of (2R,3R)-2,3-dihydroxy-3-methylpentanoate (2,3-dihydroxy-3-methylvalerate) into 2-oxo-3-methylpentanoate (2-oxo-3-methylvalerate) and of (2R)-2,3-dihydroxy-3-methylbutanoate (2,3-dihydroxyisovalerate) into 2-oxo-3-methylbutanoate (2-oxoisovalerate), the penultimate precursor to L-isoleucine and L-valine, respectively. The polypeptide is Dihydroxy-acid dehydratase (Nitrosococcus oceani (strain ATCC 19707 / BCRC 17464 / JCM 30415 / NCIMB 11848 / C-107)).